Reading from the N-terminus, the 690-residue chain is CREB-H transcription factor homolog let-607 (690 aa).

Disordered stretches follow at residues 87-118, 166-192, and 205-253; these read NDNC…SSGG, SAVH…SNGL, and PASI…KYPP. 3 stretches are compositionally biased toward low complexity: residues 100–116, 170–181, and 213–236; these read SLPI…YHSS, QNQQQQQRRLNQ, and PSSS…SSST. The bZIP domain maps to 284–347; sequence DLKRIRRKIR…QSVISQLKKL (64 aa). Residues 286-321 are basic motif; sequence KRIRRKIRNKRSAQTSRKRKQDYIEQLEDRVSESTK. Residues 295–350 adopt a coiled-coil conformation; the sequence is KRSAQTSRKRKQDYIEQLEDRVSESTKENQALKQQIERLSSENQSVISQLKKLQAQ. The interval 326–333 is leucine-zipper; the sequence is LKQQIERL. Polar residues predominate over residues 451–464; it reads HNNSKYPASGNQNH. 2 disordered regions span residues 451 to 495 and 509 to 536; these read HNNS…SMYR and GARK…ATSP. Low complexity-rich tracts occupy residues 480 to 492 and 514 to 535; these read QPKQ…HQPS and SSTS…SATS.

It belongs to the bZIP family.

It is found in the nucleus. Its function is as follows. Probable transcription factor, required during migration of the gonadal distal tip cells (DTC). Probably regulates cell adhesion of DTCs via modulation of expression of genes involved in integrin-mediated adhesion, including tln-1, src-1, and integrin pat-2. Modulates expression of genes involved in protein trafficking during embryogenesis, including emo-1, sec-61, calu-1, sec-24.1, enpl-1, sar-1 and tfg-1. This chain is CREB-H transcription factor homolog let-607, found in Caenorhabditis elegans.